We begin with the raw amino-acid sequence, 298 residues long: HTH-type transcriptional regulator ArgP (298 aa).

Residues 4–60 (VDYRWVAALDAVIAQRGFERAAEKLCITQSAVSQRIKQLEKLMAQPLLVREQPPRPT) form the HTH lysR-type domain. A DNA-binding region (H-T-H motif) is located at residues 21-40 (FERAAEKLCITQSAVSQRIK).

It belongs to the LysR transcriptional regulatory family. Homodimer.

Its function is as follows. Controls the transcription of genes involved in arginine and lysine metabolism. This is HTH-type transcriptional regulator ArgP from Photobacterium profundum (strain SS9).